The sequence spans 112 residues: Small ribosomal subunit protein bS16 (112 aa).

Belongs to the bacterial ribosomal protein bS16 family.

The chain is Small ribosomal subunit protein bS16 from Karelsulcia muelleri (strain GWSS) (Sulcia muelleri).